The following is a 463-amino-acid chain: Mitochondrial dynamics protein MIEF1 (463 aa).

The Mitochondrial intermembrane portion of the chain corresponds to M1–V23. The helical transmembrane segment at L24–V46 threads the bilayer. Residues K47–T463 lie on the Cytoplasmic side of the membrane. Residues M49 to Q195 are dimerization. Phosphoserine occurs at positions 55, 59, 79, and 94. A disordered region spans residues P57–M77. A disordered region spans residues Q96–Q123. Over residues T100–F110 the composition is skewed to low complexity. The tract at residues A160–R169 is important for interaction with DNM1L. The ADP site is built by S187, S189, and H201. The important for interaction with DNM1L stretch occupies residues R234–P242. Residues S340, R342, and K368 each coordinate ADP.

It belongs to the SMCR7 family. In terms of assembly, homodimer. Interacts with DNM1L. Expression is relatively high in heart, skeletal muscle, pancreas and kidney.

Its subcellular location is the mitochondrion outer membrane. Functionally, mitochondrial outer membrane protein which regulates mitochondrial fission/fusion dynamics. Promotes the recruitment and association of the fission mediator dynamin-related protein 1 (DNM1L) to the mitochondrial surface independently of the mitochondrial fission FIS1 and MFF proteins. Regulates DNM1L GTPase activity and DNM1L oligomerization. Binds ADP and can also bind GDP, although with lower affinity. Does not bind CDP, UDP, ATP, AMP or GTP. Inhibits DNM1L GTPase activity in the absence of bound ADP. Requires ADP to stimulate DNM1L GTPase activity and the assembly of DNM1L into long, oligomeric tubules with a spiral pattern, as opposed to the ring-like DNM1L oligomers observed in the absence of bound ADP. Does not require ADP for its function in recruiting DNM1L. The chain is Mitochondrial dynamics protein MIEF1 from Homo sapiens (Human).